The primary structure comprises 267 residues: Tryptophan synthase alpha chain (267 aa).

Catalysis depends on proton acceptor residues Glu-49 and Asp-60.

Belongs to the TrpA family. In terms of assembly, tetramer of two alpha and two beta chains.

It catalyses the reaction (1S,2R)-1-C-(indol-3-yl)glycerol 3-phosphate + L-serine = D-glyceraldehyde 3-phosphate + L-tryptophan + H2O. The protein operates within amino-acid biosynthesis; L-tryptophan biosynthesis; L-tryptophan from chorismate: step 5/5. Functionally, the alpha subunit is responsible for the aldol cleavage of indoleglycerol phosphate to indole and glyceraldehyde 3-phosphate. In Pelobacter propionicus (strain DSM 2379 / NBRC 103807 / OttBd1), this protein is Tryptophan synthase alpha chain.